The sequence spans 1511 residues: Bifunctional glutamate/proline--tRNA ligase (1511 aa).

The glutamate--tRNA ligase stretch occupies residues Gly-164 to Ala-758. A 'HIGH' region motif is present at residues Pro-204–His-214. Residues Ala-296–Ser-315 form a disordered region. A compositionally biased stretch (basic and acidic residues) spans Met-299–Ser-315. Lys-300 is subject to N6-acetyllysine; alternate. The residue at position 300 (Lys-300) is an N6-malonyllysine; alternate. Thr-355 carries the phosphothreonine modification. N6-acetyllysine is present on Lys-417. A 'KMSKS' region motif is present at residues Val-432–Arg-436. Ser-434 carries the phosphoserine modification. N6-acetyllysine is present on residues Lys-498, Lys-535, Lys-542, and Lys-637. Residues Lys-708 to Thr-728 are compositionally biased toward basic and acidic residues. The disordered stretch occupies residues Lys-708–Ser-741. Ser-746 is modified (phosphoserine). One can recognise a WHEP-TRS 1 domain in the interval Glu-748–Pro-804. The segment at Gln-759–Thr-955 is 3 X 57 AA approximate repeats. Lys-787 is modified (N6-acetyllysine). Residues Thr-794–Arg-823 are disordered. A compositionally biased stretch (polar residues) spans Ala-807–Leu-816. One can recognise a WHEP-TRS 2 domain in the interval Glu-821 to Pro-877. Residue Lys-860 is modified to N6-acetyllysine. Disordered regions lie at residues Gly-868–Leu-903 and Val-952–Leu-1015. Residue Tyr-871 is modified to Phosphotyrosine. Low complexity predominate over residues Pro-877–Ala-890. A Phosphoserine; by CDK5 modification is found at Ser-885. Thr-897 is modified (phosphothreonine). Residues Glu-899–Thr-955 form the WHEP-TRS 3 domain. Residues Ser-957–Asn-975 are compositionally biased toward basic and acidic residues. A compositionally biased stretch (gly residues) spans Gln-992–Gln-1005. A Phosphoserine modification is found at Ser-997. Ser-998 is subject to Phosphoserine; by RPS6KB1. Ser-999 carries the phosphoserine modification. The interval Gly-1006–Tyr-1511 is proline--tRNA ligase. Residues Thr-1120–Glu-1122 and Arg-1151 contribute to the L-proline site. Positions 1151, 1153, 1162, 1163, 1236, and 1239 each coordinate ATP. Arg-1151 bears the Omega-N-methylarginine mark. Gln-1236 serves as a coordination point for Mg(2+). His-1241 is a binding site for L-proline. The ATP site is built by Thr-1275 and Arg-1277. Ser-1349 is modified (phosphoserine). Zn(2+) contacts are provided by Cys-1447, Cys-1452, Cys-1494, and Cys-1496. Position 1502 is an N6-acetyllysine (Lys-1502).

The protein in the N-terminal section; belongs to the class-I aminoacyl-tRNA synthetase family. Glutamate--tRNA ligase type 2 subfamily. It in the C-terminal section; belongs to the class-II aminoacyl-tRNA synthetase family. As to quaternary structure, homodimer. Part of the aminoacyl-tRNA synthetase multienzyme complex, also know as multisynthetase complex, that is composed of the tRNA ligases for Arg (RARS1), Asp (DARS1), Gln (QARS1), Ile (IARS1), Leu (LARS1), Lys (KARS1), Met (MARS1) the bifunctional ligase for Glu and Pro (EPRS1) and the auxiliary subunits AIMP1/p43, AIMP2/p38 and EEF1E1/p18. Forms a linear complex that contains MARS1, EEF1E1, EPRS1 and AIMP2 that is at the core of the multisubunit complex. Interacts with TARS3. Interacts with DUS2L. Component of the GAIT complex which is composed of EPRS1, RPL13A and GAPDH. Interacts (phosphorylated at Ser-998) with SLC27A1; mediates the translocation of SLC27A1 from the cytoplasm to the plasma membrane thereby increasing the uptake of long-chain fatty acids. Post-translationally, phosphorylated at Ser-998 by RPS6KB1; triggers EPRS1 release from the aminoacyl-tRNA synthetase multienzyme complex. In monocytes, the IFN-gamma-induced phosphorylation at Ser-998 releases EPRS1 from the aminoacyl-tRNA synthetase multienzyme complex, allowing its association with the GAIT complex. Phosphorylation at Ser-998 is specifically required for the RPL13A-mediated interaction of the GAIT complex with eIF4G. Phosphorylation at Ser-998 by RPS6KB1, is also induced by insulin through activation of the mTORC1 signaling pathway and promotes the interaction of EPRS1 with SLC27A1.

It localises to the cytoplasm. The protein localises to the cytosol. It is found in the membrane. It catalyses the reaction tRNA(Glu) + L-glutamate + ATP = L-glutamyl-tRNA(Glu) + AMP + diphosphate. The enzyme catalyses tRNA(Pro) + L-proline + ATP = L-prolyl-tRNA(Pro) + AMP + diphosphate. In terms of biological role, multifunctional protein which primarily functions within the aminoacyl-tRNA synthetase multienzyme complex, also known as multisynthetase complex. Within the complex it catalyzes the attachment of both L-glutamate and L-proline to their cognate tRNAs in a two-step reaction where the amino acid is first activated by ATP to form a covalent intermediate with AMP. Subsequently, the activated amino acid is transferred to the acceptor end of the cognate tRNA to form L-glutamyl-tRNA(Glu) and L-prolyl-tRNA(Pro). Upon interferon-gamma stimulation, EPRS1 undergoes phosphorylation, causing its dissociation from the aminoacyl-tRNA synthetase multienzyme complex. It is recruited to form the GAIT complex, which binds to stem loop-containing GAIT elements found in the 3'-UTR of various inflammatory mRNAs, such as ceruloplasmin. The GAIT complex inhibits the translation of these mRNAs, allowing interferon-gamma to redirect the function of EPRS1 from protein synthesis to translation inhibition in specific cell contexts. Furthermore, it can function as a downstream effector in the mTORC1 signaling pathway, by promoting the translocation of SLC27A1 from the cytoplasm to the plasma membrane where it mediates the uptake of long-chain fatty acid by adipocytes. Thereby, EPRS1 also plays a role in fat metabolism and more indirectly influences lifespan. The sequence is that of Bifunctional glutamate/proline--tRNA ligase from Cricetulus griseus (Chinese hamster).